Consider the following 156-residue polypeptide: ATP synthase subunit b (156 aa).

The chain crosses the membrane as a helical span at residues 12–32; sequence VAFLIFVLFCMKYVWPPVITA.

The protein belongs to the ATPase B chain family. As to quaternary structure, F-type ATPases have 2 components, F(1) - the catalytic core - and F(0) - the membrane proton channel. F(1) has five subunits: alpha(3), beta(3), gamma(1), delta(1), epsilon(1). F(0) has three main subunits: a(1), b(2) and c(10-14). The alpha and beta chains form an alternating ring which encloses part of the gamma chain. F(1) is attached to F(0) by a central stalk formed by the gamma and epsilon chains, while a peripheral stalk is formed by the delta and b chains.

The protein resides in the cell inner membrane. Functionally, f(1)F(0) ATP synthase produces ATP from ADP in the presence of a proton or sodium gradient. F-type ATPases consist of two structural domains, F(1) containing the extramembraneous catalytic core and F(0) containing the membrane proton channel, linked together by a central stalk and a peripheral stalk. During catalysis, ATP synthesis in the catalytic domain of F(1) is coupled via a rotary mechanism of the central stalk subunits to proton translocation. Component of the F(0) channel, it forms part of the peripheral stalk, linking F(1) to F(0). This Pseudomonas putida (strain GB-1) protein is ATP synthase subunit b.